The primary structure comprises 1386 residues: YLP motif-containing protein 1 (1386 aa).

Disordered stretches follow at residues 1 to 336 and 517 to 1068; these read MYPN…EDAR and TSIP…PPGR. The span at 14 to 27 shows a compositional bias: pro residues; sequence YPPPPVPPPPPPVA. Composition is skewed to low complexity over residues 31 to 50 and 59 to 80; these read ASPG…SSSG and LAQL…LQPH. 5 stretches are compositionally biased toward pro residues: residues 81–93, 102–114, 148–158, 166–176, and 184–203; these read HLPP…PPVM, QPPP…PPGP, PESPPVPPGSY, MPPPQPPPSYY, and YLPP…PPSI. The segment covering 237–259 has biased composition (polar residues); that stretch reads STMTPQEQQQYWYRQHLLSLQQR. The span at 260-270 shows a compositional bias: basic residues; sequence TKVHLPGHKKG. Positions 276–285 are enriched in basic and acidic residues; the sequence is DVPEPIKEEA. The segment covering 302-317 has biased composition (pro residues); sequence PPLPPPNEEAPPPLSP. The span at 320-333 shows a compositional bias: acidic residues; it reads PQSEDSEDSEDSEE. 3 stretches are compositionally biased toward pro residues: residues 517-558, 566-603, and 641-650; these read TSIP…PPPA, PVLP…PQGM, and PPSPYHPPPQ. The segment covering 651-667 has biased composition (polar residues); the sequence is SEQVNSKPLNKVFSSEQ. Lys-683 bears the N6-methyllysine mark. Positions 706–722 are enriched in basic and acidic residues; the sequence is RGPREQKEQLQKLKDFG. A compositionally biased stretch (pro residues) spans 746-761; the sequence is MYPPPGSYRPPPPMGK. The span at 762–779 shows a compositional bias: low complexity; the sequence is PPGSIVRPSAPPARSSIP. Pro residues-rich tracts occupy residues 781 to 803 and 848 to 878; these read TRPP…PPPV and PVLP…PPPV. Residue Lys-894 forms a Glycyl lysine isopeptide (Lys-Gly) (interchain with G-Cter in SUMO2) linkage. Basic and acidic residues-rich tracts occupy residues 904 to 938, 945 to 1014, 1023 to 1033, and 1049 to 1068; these read ITLR…EPYF, TDHR…DRPP, GERRTYPEERM, and RVEK…PPGR. A Glycyl lysine isopeptide (Lys-Gly) (interchain with G-Cter in SUMO2) cross-link involves residue Lys-951. The segment at 1336–1343 is involved in interaction with PPP1CA; that stretch reads KKRVRWAD.

Interacts with PPP1CA and NCOA5. Forms a complex with ILF2, ILF3, KHDRBS1, RBMX, NCOA5 and PPP1CA.

It is found in the nucleus. Its subcellular location is the nucleus speckle. In terms of biological role, plays a role in the reduction of telomerase activity during differentiation of embryonic stem cells by binding to the core promoter of TERT and controlling its down-regulation. In Mus musculus (Mouse), this protein is YLP motif-containing protein 1 (Ylpm1).